The primary structure comprises 1786 residues: MLSVHFWQTPVRPTDAASSLANGIQTPTHRRCQTSNWTGQLSSRTLATIAARAAAPWLQTTSAASFGSPPTSLWLAEAPPQGLKNWAVVATVAVVPTALGPAQARGNLFQATLWPLRDQRGTQDSPSAHHCLILSLKPGQGLRMEGGTSDMNSQTSLTPAEDPVSRPQDSPEPRQQLRPLPEPSASTLPEAKYVETCASAGLRRESPQTLKLPPEQQASRSPKTKAQDEPSGHAPEAPAPGESPASSQCLPSQACENDFSSSSSSSSSLVDSAEDNGLSKMDDPTKLLGVLATSSSSLGFESDPETSCRQHREEAGDRAGAGEDKRGGVDDGIASCKDIIAKSHSKRGPLRNEDAHYITTHEIQLTEVEQGMDFDVGLASRWDFEDNNVIYSFVDYASFGGSDETPGDITTEEDDDNSCYVSTTPSTNTTRTPSPISSDLARPGAGSSGRDTSSTEVGSGPSDSDTVPPPTGPGTATPPEPLLELREAALGASATAASSCGSAASQILLSIKPTSRAINEPSNVRAKQNIIYAAKHEGDMSLRVSSAAEHNSSSLKQNSAAAVAQDHAKKFIAVPARLQTRCGAIRAKELVDYASGASSAVSELDDADKEVRNLTSRAFRSLAYPYFEALNISSRESSTTLSEVGFGRWSTFLDLKCGGVGARVEQSLLRSSAASVAAGLRKGGGTRATADQLYLQTKKSQTKALEFVVSKVEGEIKHVETPLCFQKQVQTGSRVVTLLEPLNLRSESKASSATGPCRITKGSSKGPGSVYTDDGSETSESSKPASRSDGPQKKSKFASSLLKNVISKKMQREHEFKMERGEVTDTSHRNPPSTKETEGPPGAEKPWERGLQRQSSRHSEASSEYTVVSVSDAGGEGSVVGSKSPIFKASTPRESHTGSGQNVSDGHTEVCEIKKSASETVKGIFLRSQNSAFRTWKEKEAEKLEEKAPVGRLKLRKGGDWRADLGEISASKSTIMSRLFVPNIQQTPKDKQPEKQATKYPAAAAQATSVAVIRPKAPEIKIRLGSVQQPSSDFNIAKLLTPKLASGSSSKLFKTIEDNSRTQQKLFRGGDNLEKVPQFQVRDVRDKSKASGPLHQVRDVRKLIKGSGDSSDKGSVTPEQGLTGPKPRQLTPASGGSRSLSPMVIMCQAVANPREEGVDREPREGVSQVSNGGRLLNSSPEGTVLVHRASGRLPVATIAPNKSEQGSYLPVLKIVSKASAQRTPEKPKEEEAKEEGKAPKPARNALEKLTAAVRSMEELYSFNRNEWKRKSDPLPMMADSHVLSLIASEEKEGVAGPEGGDPDKLAKQLGQVEERDTGHKGGVVLRAAPIERLQRRNSNPSTESVSARAAAFENMARERPRSLYIPPVHKDVERTQPLQPLPPLPGNRNVFTVSSSSTQKTGGVAGKFPQGPSPEGLSTAKGIKAQGLRSLKISPATRAPPEDASNRKTAVSLEKSNSDCENYLTIPLKGSAASAELLGRPGASRDGPPSSSAATLCSLPPLSARSQVPSNPKGSQVSGTSRPAWRTKPDNHRETVVAAPTGPQSPEHTPTAVYHQQALPFTLQGAQPQVLCFSPPGMPAPAPAGPAAVPTDPFQQPQPQQTQRKMLLDVTTGQYYLVDTPVQPMTRRLFDPETGQYVDVPMTSQQQPVAPMSLPVPPLALSPGAYGPTYMIYPGFLPTVLPPNALQPTPMAHTPGGSELSVATEPPSKETAAAFTEAPYFMASSQSPASSSSSAPAATPQLVGAKGFAQLHGKPVISITSQPLGPRIIAPPSFDGTTMSFVVEHR.

Disordered stretches follow at residues 140–191 (QGLR…LPEA), 203–329 (RRES…RGGV), and 400–480 (GGSD…TPPE). The span at 149–158 (SDMNSQTSLT) shows a compositional bias: polar residues. Positions 232 to 247 (GHAPEAPAPGESPASS) are enriched in low complexity. Positions 248-259 (QCLPSQACENDF) are enriched in polar residues. A compositionally biased stretch (basic and acidic residues) spans 306–329 (TSCRQHREEAGDRAGAGEDKRGGV). Residues 422–438 (STTPSTNTTRTPSPISS) are compositionally biased toward low complexity. Pro residues predominate over residues 467 to 480 (VPPPTGPGTATPPE). Threonine 721 carries the post-translational modification Phosphothreonine. Disordered stretches follow at residues 746–907 (SESK…SDGH), 1081–1180 (VRDV…NSSP), 1218–1242 (ASAQ…PKPA), 1291–1348 (KEGV…VSAR), 1362–1460 (SLYI…NSDC), and 1477–1550 (LLGR…EHTP). Composition is skewed to basic and acidic residues over residues 810–828 (MQRE…DTSH) and 845–861 (KPWE…HSEA). The segment covering 1105-1115 (KGSGDSSDKGS) has biased composition (low complexity). The segment covering 1131–1140 (TPASGGSRSL) has biased composition (polar residues). Residues 1153–1164 (PREEGVDREPRE) are compositionally biased toward basic and acidic residues. Polar residues predominate over residues 1167–1180 (SQVSNGGRLLNSSP). Phosphoserine is present on serine 1179. 2 stretches are compositionally biased toward basic and acidic residues: residues 1223-1238 (TPEK…EGKA) and 1301-1319 (DPDK…DTGH). Polar residues-rich tracts occupy residues 1336–1345 (RNSNPSTESV), 1389–1401 (NVFT…TQKT), and 1504–1521 (ARSQ…SGTS). An Omega-N-methylarginine modification is found at arginine 1767.

This is an uncharacterized protein from Mus musculus (Mouse).